Reading from the N-terminus, the 169-residue chain is N5-carboxyaminoimidazole ribonucleotide mutase (169 aa).

The substrate site is built by Ser-16, Asp-19, and Arg-46.

Belongs to the AIR carboxylase family. Class I subfamily.

The catalysed reaction is 5-carboxyamino-1-(5-phospho-D-ribosyl)imidazole + H(+) = 5-amino-1-(5-phospho-D-ribosyl)imidazole-4-carboxylate. It participates in purine metabolism; IMP biosynthesis via de novo pathway; 5-amino-1-(5-phospho-D-ribosyl)imidazole-4-carboxylate from 5-amino-1-(5-phospho-D-ribosyl)imidazole (N5-CAIR route): step 2/2. Catalyzes the conversion of N5-carboxyaminoimidazole ribonucleotide (N5-CAIR) to 4-carboxy-5-aminoimidazole ribonucleotide (CAIR). This chain is N5-carboxyaminoimidazole ribonucleotide mutase, found in Escherichia coli O157:H7.